A 189-amino-acid polypeptide reads, in one-letter code: NADH-quinone oxidoreductase subunit B (189 aa).

[4Fe-4S] cluster-binding residues include Cys-39, Cys-40, Cys-104, and Cys-135.

It belongs to the complex I 20 kDa subunit family. NDH-1 is composed of 14 different subunits. Subunits NuoB, C, D, E, F, and G constitute the peripheral sector of the complex. The cofactor is [4Fe-4S] cluster.

The protein resides in the cell inner membrane. It catalyses the reaction a quinone + NADH + 5 H(+)(in) = a quinol + NAD(+) + 4 H(+)(out). In terms of biological role, NDH-1 shuttles electrons from NADH, via FMN and iron-sulfur (Fe-S) centers, to quinones in the respiratory chain. The immediate electron acceptor for the enzyme in this species is believed to be a menaquinone. Couples the redox reaction to proton translocation (for every two electrons transferred, four hydrogen ions are translocated across the cytoplasmic membrane), and thus conserves the redox energy in a proton gradient. The sequence is that of NADH-quinone oxidoreductase subunit B from Chlorobium phaeobacteroides (strain DSM 266 / SMG 266 / 2430).